The following is a 964-amino-acid chain: Reticulon-3 (964 aa).

Residues 1–24 show a composition bias toward low complexity; the sequence is MAESSAATQSPSVSSSSSGAEPSA. Disordered regions lie at residues 1–32, 68–109, and 179–200; these read MAES…GGSP, AGLS…SETL, and WVVK…DRSA. A2 is modified (N-acetylalanine). At 2–795 the chain is on the cytoplasmic side; the sequence is AESSAATQSP…KKTGFVFGTT (794 aa). S31 bears the Phosphoserine mark. Low complexity predominate over residues 80 to 91; that stretch reads SKSMTSSFLSSS. Phosphoserine is present on residues S217, S225, S230, S233, S270, S303, and S429. Residues 479–536 form a disordered region; the sequence is ITEKPDSLPSAAAKTSEREIKETPSRETVRSEMCENSEQPQAQPETPTQKSLEGEVAS. Residues 493–511 show a composition bias toward basic and acidic residues; the sequence is TSEREIKETPSRETVRSEM. Over residues 516-527 the composition is skewed to low complexity; that stretch reads EQPQAQPETPTQ. The residue at position 529 (S529) is a Phosphoserine. T593 bears the Phosphothreonine mark. Phosphoserine occurs at positions 596, 597, and 673. Disordered regions lie at residues 645-674 and 697-723; these read ELSG…TMSP and VQDE…SSSD. A compositionally biased stretch (polar residues) spans 712–723; sequence FAPQSGPQSSSD. The Reticulon domain maps to 776 to 964; that stretch reads VHDLIFWRDV…LPGIAKKKAE (189 aa). Residues 796 to 819 constitute an intramembrane region (helical); the sequence is LIMLLSLAAFSVISVVSYLILALL. Over 820 to 876 the chain is Cytoplasmic; that stretch reads SVTISFRVYKSVIQAVQKSEEGHPFKAYLDVDITLSSEAFHNYMNAAMVHVNKALKL. The segment at residues 877 to 899 is an intramembrane region (helical); that stretch reads IIRLFLVEDLVDSLKLAVFMWLM. At 900–903 the chain is on the cytoplasmic side; it reads TYVG. An intramembrane region (helical) is located at residues 904 to 926; the sequence is AVFNGITLLILAELLVFSVPIVY. The interval 919–964 is interaction with FADD; it reads VFSVPIVYEKYKTQIDHYVGIARDQTKSIVEKIQAKLPGIAKKKAE. Residues 927-964 lie on the Cytoplasmic side of the membrane; sequence EKYKTQIDHYVGIARDQTKSIVEKIQAKLPGIAKKKAE. An interaction with BACE1 region spans residues 932 to 934; sequence QID.

In terms of assembly, homodimer. Interacts with RTN4. Isoform 3 interacts with BACE1, BACE2, BCL2 and FADD. Interacts with ATL1 and ATL2. Isoform 3 interacts with TMEM33. Interacts with ZFYVE27 and with KIF5A in a ZFYVE27-dependent manner. Interacts with RIGI. Interacts with TRIM25. Isoform 1, isoform 3, isoform 4 and isoform 5 are expressed in spinal cord. Isoform 1 is present in brain, where it is expressed in the neurons of cerebral cortex, hippocampus, hypothalamus and cerebellum (at protein level).

The protein localises to the endoplasmic reticulum membrane. The protein resides in the golgi apparatus membrane. May be involved in membrane trafficking in the early secretory pathway. Inhibits BACE1 activity and amyloid precursor protein processing. May induce caspase-8 cascade and apoptosis. May favor BCL2 translocation to the mitochondria upon endoplasmic reticulum stress. Induces the formation of endoplasmic reticulum tubules. Also acts as an inflammation-resolving regulator by interacting with both TRIM25 and RIGI, subsequently impairing RIGI 'Lys-63'-linked polyubiquitination leading to IRF3 and NF-kappa-B inhibition. This Mus musculus (Mouse) protein is Reticulon-3 (Rtn3).